A 209-amino-acid chain; its full sequence is Peroxynitrite isomerase 2 (209 aa).

The GXWXGXG signature appears at 56 to 62 (GVWRGEG). 2 residues coordinate heme b: lysine 172 and histidine 199.

It belongs to the nitrobindin family. Homodimer. The cofactor is heme b.

The enzyme catalyses peroxynitrite = nitrate. Its pathway is nitrogen metabolism. Functionally, heme-binding protein able to scavenge peroxynitrite and to protect free L-tyrosine against peroxynitrite-mediated nitration, by acting as a peroxynitrite isomerase that converts peroxynitrite to nitrate. Therefore, this protein likely plays a role in peroxynitrite sensing and in the detoxification of reactive nitrogen and oxygen species (RNS and ROS, respectively). Is able to bind nitric oxide (NO) in vitro, but may act as a sensor of peroxynitrite levels in vivo. The sequence is that of Peroxynitrite isomerase 2 from Mycolicibacterium gilvum (strain PYR-GCK) (Mycobacterium gilvum (strain PYR-GCK)).